Reading from the N-terminus, the 299-residue chain is N-carbamoylputrescine amidase (299 aa).

In terms of domain architecture, CN hydrolase spans 10 to 268 (VVVSSLQFAC…EAVLVAQFDL (259 aa)). The active-site Proton acceptor is the E49. K122 serves as the catalytic Proton donor. C159 (nucleophile) is an active-site residue.

It belongs to the carbon-nitrogen hydrolase superfamily. In terms of assembly, homooctamer (isoform 2). Expressed in roots, stems, leaves and flowers.

The enzyme catalyses N-carbamoylputrescine + H2O + 2 H(+) = putrescine + NH4(+) + CO2. The protein operates within amine and polyamine biosynthesis; putrescine biosynthesis via agmatine pathway; putrescine from N-carbamoylputrescine (amidase route): step 1/1. In terms of biological role, involved in polyamine biosynthesis. Catalyzes the hydrolysis of N-carbamoylputrescine to produce putrescine and ammonia. The chain is N-carbamoylputrescine amidase from Arabidopsis thaliana (Mouse-ear cress).